Consider the following 255-residue polypeptide: Pimeloyl-[acyl-carrier protein] methyl ester esterase (255 aa).

An AB hydrolase-1 domain is found at 16–242 (LVLLHGWGLN…AAHAPFISHP (227 aa)). Substrate is bound by residues Trp-22, 82-83 (SL), and 143-147 (FLALQ). Ser-82 functions as the Nucleophile in the catalytic mechanism. Residues Asp-207 and His-235 contribute to the active site. His-235 provides a ligand contact to substrate.

It belongs to the AB hydrolase superfamily. Carboxylesterase BioH family. In terms of assembly, monomer.

It is found in the cytoplasm. The catalysed reaction is 6-carboxyhexanoyl-[ACP] methyl ester + H2O = 6-carboxyhexanoyl-[ACP] + methanol + H(+). Its pathway is cofactor biosynthesis; biotin biosynthesis. The physiological role of BioH is to remove the methyl group introduced by BioC when the pimeloyl moiety is complete. It allows to synthesize pimeloyl-ACP via the fatty acid synthetic pathway through the hydrolysis of the ester bonds of pimeloyl-ACP esters. The sequence is that of Pimeloyl-[acyl-carrier protein] methyl ester esterase from Pectobacterium atrosepticum (strain SCRI 1043 / ATCC BAA-672) (Erwinia carotovora subsp. atroseptica).